Here is a 188-residue protein sequence, read N- to C-terminus: uncharacterized protein (188 aa).

The signal sequence occupies residues 1 to 23; that stretch reads MFKGQKTLAALAVSLLFTAPVYA. A disulfide bond links cysteine 42 and cysteine 81.

Belongs to the fimbrial protein family.

The protein resides in the fimbrium. This is an uncharacterized protein from Escherichia coli (strain K12).